A 227-amino-acid polypeptide reads, in one-letter code: NAD(P)H-quinone oxidoreductase subunit K, chloroplastic (227 aa).

[4Fe-4S] cluster contacts are provided by cysteine 43, cysteine 44, cysteine 108, and cysteine 139.

This sequence belongs to the complex I 20 kDa subunit family. In terms of assembly, NDH is composed of at least 16 different subunits, 5 of which are encoded in the nucleus. [4Fe-4S] cluster is required as a cofactor.

It localises to the plastid. It is found in the chloroplast thylakoid membrane. It catalyses the reaction a plastoquinone + NADH + (n+1) H(+)(in) = a plastoquinol + NAD(+) + n H(+)(out). The catalysed reaction is a plastoquinone + NADPH + (n+1) H(+)(in) = a plastoquinol + NADP(+) + n H(+)(out). Functionally, NDH shuttles electrons from NAD(P)H:plastoquinone, via FMN and iron-sulfur (Fe-S) centers, to quinones in the photosynthetic chain and possibly in a chloroplast respiratory chain. The immediate electron acceptor for the enzyme in this species is believed to be plastoquinone. Couples the redox reaction to proton translocation, and thus conserves the redox energy in a proton gradient. This chain is NAD(P)H-quinone oxidoreductase subunit K, chloroplastic, found in Spinacia oleracea (Spinach).